The following is a 1302-amino-acid chain: Serine-enriched protein (1302 aa).

The BTB domain maps to 40–158 (CDVTFLVGDT…IHTGCVTLQP (119 aa)). Disordered regions lie at residues 325–532 (SIDP…RSPT), 575–624 (PIPP…SVMR), 648–685 (FTRA…QKQM), 701–752 (YAKM…SSDE), 834–858 (FTRR…DSND), 1045–1090 (FQRS…RTEN), 1102–1163 (FSRA…GEEE), and 1187–1252 (VLTQ…SASP). Residues 337-364 (RQHHRHRHHHQSLPKIRKAKSQSFRTRR) show a composition bias toward basic residues. 4 stretches are compositionally biased toward polar residues: residues 378 to 388 (LTLNTSLTSGN), 410 to 430 (SPGS…TLRA), 437 to 449 (SGQL…TQGR), and 472 to 487 (GLRS…TVRS). The segment covering 589–623 (KSAEREREAAEAAAREKEKEKEKEAAQPQEKKSVM) has biased composition (basic and acidic residues). The span at 664 to 680 (STFSASPAASSTAAKSA) shows a compositional bias: low complexity. Residues 713 to 723 (KRDDEEKEKQK) are compositionally biased toward basic and acidic residues. Residues 736-748 (DLSQTNADQQVGG) show a composition bias toward polar residues. Positions 836-855 (RRSESREPIEPRISEERESD) are enriched in basic and acidic residues. 2 stretches are compositionally biased toward low complexity: residues 1047–1056 (RSGSSCGGRK) and 1107–1128 (SPLS…SSGS). Residues 1187–1207 (VLTQQLSTGSMSTPSGYTNGT) show a composition bias toward polar residues. A compositionally biased stretch (low complexity) spans 1226–1252 (APLSSCGFSSGSEFEPPSPRRAASASP).

The chain is Serine-enriched protein (gprs) from Drosophila melanogaster (Fruit fly).